Consider the following 734-residue polypeptide: Photosystem I P700 chlorophyll a apoprotein A2 (734 aa).

8 consecutive transmembrane segments (helical) span residues 46-69 (IFASHFGQLAIIFLWTSGNLFHVA), 135-158 (LYTGAIFLLFLSFISLLAGWLHLQ), 175-199 (LNHHLSGLFGVSSLAWAGHLVHVAI), 273-291 (VAHHHLAIAFLFLIGGLMY), 330-353 (IHFQLGLALASLGVITSLVAQHMY), 369-395 (AALYTHHQYIAGFIMTGAFAHGPIFFI), 417-439 (AIISHLSWASLFLGFHTLGLYVH), and 517-535 (FLVHHAIALGLHTTTLILV). [4Fe-4S] cluster contacts are provided by cysteine 559 and cysteine 568. The next 2 helical transmembrane spans lie at 575–596 (DFYLAVFWMLNTIGWVTFYWHW) and 643–665 (LSVWAWMFLFGHLVWATGFMFLI). The chlorophyll a site is built by histidine 654, methionine 662, and tyrosine 670. Residue tryptophan 671 participates in phylloquinone binding. The helical transmembrane segment at 707 to 727 (LVGLVHFSVGYIFTYAAFLIA) threads the bilayer.

It belongs to the PsaA/PsaB family. The PsaA/B heterodimer binds the P700 chlorophyll special pair and subsequent electron acceptors. PSI consists of a core antenna complex that captures photons, and an electron transfer chain that converts photonic excitation into a charge separation. The eukaryotic PSI reaction center is composed of at least 11 subunits. P700 is a chlorophyll a/chlorophyll a' dimer, A0 is one or more chlorophyll a, A1 is one or both phylloquinones and FX is a shared 4Fe-4S iron-sulfur center. serves as cofactor.

It localises to the plastid. It is found in the chloroplast thylakoid membrane. It carries out the reaction reduced [plastocyanin] + hnu + oxidized [2Fe-2S]-[ferredoxin] = oxidized [plastocyanin] + reduced [2Fe-2S]-[ferredoxin]. PsaA and PsaB bind P700, the primary electron donor of photosystem I (PSI), as well as the electron acceptors A0, A1 and FX. PSI is a plastocyanin-ferredoxin oxidoreductase, converting photonic excitation into a charge separation, which transfers an electron from the donor P700 chlorophyll pair to the spectroscopically characterized acceptors A0, A1, FX, FA and FB in turn. Oxidized P700 is reduced on the lumenal side of the thylakoid membrane by plastocyanin. This Pisum sativum (Garden pea) protein is Photosystem I P700 chlorophyll a apoprotein A2.